Here is a 164-residue protein sequence, read N- to C-terminus: Telomerase-associated protein of 19 kDa (164 aa).

As to quaternary structure, component of the telomerase holoenzyme complex, composed of the catalytic core (the catalytic subunit TERT, the telomerase RNA template component TER and TAP65/p65), which is associated with two heterotrimeric subcomplexes: (i) the replication protein A (RPA)-related subcomplex, composed of TEB1, RPA2/TEB2 and RPA3/TEB3 and (ii) the CST-like subcomplex, composed of TAP75/p75, TAP45/p45 and TAP19/p19. TEB1 and the CST-like subcomplex are tethered to the catalytic core by TAP50/p50.

The protein localises to the chromosome. It is found in the telomere. Its function is as follows. Component of a CST-like subcomplex of the holoenzyme telomerase ribonucleoprotein complex, which stimulates telomerase complementary-strand synthesis. Telomerase is an essential ribonucleoprotein enzyme that copies new telomeric repeats onto chromosome ends by repetitively synthesizing the short telomere-repeat sequence 5'-TTGGGG-3' using an RNA template component TER. The CST-like subcomplex (also named 7-4-1) binds telomeric single-stranded DNA and coordinates telomere G-strand and C-strand synthesis. This chain is Telomerase-associated protein of 19 kDa, found in Tetrahymena thermophila (strain SB210).